Consider the following 140-residue polypeptide: MRHARGYRRLNRTHEHRKALFANMAGSLIEHEQIKTTLPKAKELRPIVEKLITLGKRGDLHARRQAAAQLKEDKDVAKLFDVLAERYKDRQGGYVRILKAGFRYGDMAPMAIIEFVDRDVDAKGAADKARLAEEEAAAEE.

Belongs to the bacterial ribosomal protein bL17 family. Part of the 50S ribosomal subunit. Contacts protein L32.

This chain is Large ribosomal subunit protein bL17, found in Ruegeria pomeroyi (strain ATCC 700808 / DSM 15171 / DSS-3) (Silicibacter pomeroyi).